The sequence spans 180 residues: Protein sll1483 (180 aa).

The N-terminal stretch at 1–26 (MKTAARIVAFTALTGFALGMPTVAMA) is a signal peptide. The region spanning 45–176 (AMTIVEVAAG…GVIHVIDQVI (132 aa)) is the FAS1 domain.

This chain is Protein sll1483, found in Synechocystis sp. (strain ATCC 27184 / PCC 6803 / Kazusa).